Here is a 131-residue protein sequence, read N- to C-terminus: Small ribosomal subunit protein uS8 (131 aa).

Belongs to the universal ribosomal protein uS8 family. In terms of assembly, part of the 30S ribosomal subunit. Contacts proteins S5 and S12.

Functionally, one of the primary rRNA binding proteins, it binds directly to 16S rRNA central domain where it helps coordinate assembly of the platform of the 30S subunit. The sequence is that of Small ribosomal subunit protein uS8 from Clostridium novyi (strain NT).